We begin with the raw amino-acid sequence, 293 residues long: Caspase-6 (293 aa).

The tract at residues 1-20 (MSSEPPPRRARGPGEEQNMT) is disordered. The propeptide occupies 1-23 (MSSEPPPRRARGPGEEQNMTEID). The tri-arginine exosite stretch occupies residues 42–44 (KRR). Ser79 bears the Phosphoserine mark. His121 is an active-site residue. Residues 125–142 (NHIYAYDAKIEIQTLTGL) form a 130's region region. Cys163 is a catalytic residue. Positions 180–193 (HRTDTPDANLTQVD) are excised as a propeptide. The residue at position 257 (Ser257) is a Phosphoserine. 2 S-palmitoyl cysteine lipidation sites follow: Cys264 and Cys277.

This sequence belongs to the peptidase C14A family. In terms of assembly, heterotetramer that consists of two anti-parallel arranged heterodimers, each one formed by a 18 kDa (p18) and a 11 kDa (p11) subunits. Interacts with BIRC6/bruce. Interacts with RIPK3. As to quaternary structure, heterotetramer that consists of two anti-parallel arranged heterodimers, each one formed by a 18 kDa (Caspase-6 subunit p18) and a 11 kDa (Caspase-6 subunit p11) subunit. In terms of processing, phosphorylated by NUAK1; phosphorylation inhibits self-activation. Phosphorylation at Ser-257 by AMP-activated protein kinase (PRKAA1 or PRKAA2) inhibits autocleavage, preventing caspase activation, thereby preventing hepatocyte apoptosis. Palmitoylation by ZDHHC17 blocks dimerization and subsequent activation, leading to inhibit the cysteine protease activity. Post-translationally, can be cleaved and activated by different caspases, depending on the context. Cleaved and activated by caspase-8 (CASP8) and subsequently by caspase-3 (CASP3). Can also undergo autoactivation by mediating autocleavage at Asp-179 and Asp-193, while it is not able to cleave its N-terminal disordered prodomain. Cleaved and activated by CASP1, possibly in the context of inflammation.

It localises to the cytoplasm. Its subcellular location is the nucleus. The catalysed reaction is Strict requirement for Asp at position P1 and has a preferred cleavage sequence of Val-Glu-His-Asp-|-.. With respect to regulation, during activation, the N-terminal disordered prodomain is removed by cleavage. Concomitantly, double cleavage gives rise to a large 18-kDa and a small 11-kDa subunit. The two large and two small subunits then assemble to form the active CASP6 complex. Can be cleaved and activated by different caspases, depending on the context. Cleaved and activated by caspase-8 (CASP8) and subsequently by caspase-3 (CASP3). Can also undergo autoactivation by mediating autocleavage at Asp-179 and Asp-193, while it is not able to cleave its N-terminal disordered prodomain. Intramolecular cleavage at Asp-193 is a prerequisite for CASP6 self-activation. Cleaved and activated by CASP1 in neurons, possibly in the context of inflammation. Phosphorylation at Ser-257 inhibits autocleavage, preventing caspase activation. Cysteine protease that plays essential roles in programmed cell death, axonal degeneration, development and innate immunity. Acts as a non-canonical executioner caspase during apoptosis: localizes in the nucleus and cleaves the nuclear structural protein NUMA1 and lamin A/LMNA thereby inducing nuclear shrinkage and fragmentation. Lamin-A/LMNA cleavage is required for chromatin condensation and nuclear disassembly during apoptotic execution. Acts as a regulator of liver damage by promoting hepatocyte apoptosis: in absence of phosphorylation by AMP-activated protein kinase (AMPK), catalyzes cleavage of BID, leading to cytochrome c release, thereby participating in nonalcoholic steatohepatitis. Cleaves PARK7/DJ-1 in cells undergoing apoptosis. Involved in intrinsic apoptosis by mediating cleavage of RIPK1. Furthermore, cleaves many transcription factors such as NF-kappa-B and cAMP response element-binding protein/CREBBP. Cleaves phospholipid scramblase proteins XKR4 and XKR9. In addition to apoptosis, involved in different forms of programmed cell death. Plays an essential role in defense against viruses by acting as a central mediator of the ZBP1-mediated pyroptosis, apoptosis, and necroptosis (PANoptosis), independently of its cysteine protease activity. PANoptosis is a unique inflammatory programmed cell death, which provides a molecular scaffold that allows the interactions and activation of machinery required for inflammasome/pyroptosis, apoptosis and necroptosis. Mechanistically, interacts with RIPK3 and enhances the interaction between RIPK3 and ZBP1, leading to ZBP1-mediated inflammasome activation and cell death. Plays an essential role in axon degeneration during axon pruning which is the remodeling of axons during neurogenesis but not apoptosis. Regulates B-cell programs both during early development and after antigen stimulation. The polypeptide is Caspase-6 (Bos taurus (Bovine)).